We begin with the raw amino-acid sequence, 376 residues long: Chaperone protein DnaJ (376 aa).

Residues 5-70 (DFYDVLGVSK…EKKQNYDNFG (66 aa)) form the J domain. The CR-type zinc finger occupies 137–215 (GKKQDIKFST…CNGQGNKQAS (79 aa)). Zn(2+) is bound by residues Cys-150, Cys-153, Cys-167, Cys-170, Cys-189, Cys-192, Cys-203, and Cys-206. 4 CXXCXGXG motif repeats span residues 150 to 157 (CNTCNGNG), 167 to 174 (CTVCGGNG), 189 to 196 (CPQCAGSG), and 203 to 210 (CTDCNGQG).

This sequence belongs to the DnaJ family. Homodimer. The cofactor is Zn(2+).

The protein localises to the cytoplasm. Participates actively in the response to hyperosmotic and heat shock by preventing the aggregation of stress-denatured proteins and by disaggregating proteins, also in an autonomous, DnaK-independent fashion. Unfolded proteins bind initially to DnaJ; upon interaction with the DnaJ-bound protein, DnaK hydrolyzes its bound ATP, resulting in the formation of a stable complex. GrpE releases ADP from DnaK; ATP binding to DnaK triggers the release of the substrate protein, thus completing the reaction cycle. Several rounds of ATP-dependent interactions between DnaJ, DnaK and GrpE are required for fully efficient folding. Also involved, together with DnaK and GrpE, in the DNA replication of plasmids through activation of initiation proteins. This chain is Chaperone protein DnaJ, found in Pelagibacter ubique (strain HTCC1062).